A 369-amino-acid polypeptide reads, in one-letter code: MKNAYYIGLMSGTSMDGVDAVLVDFSGAQPQLIASHTEAIPSHLLKGLQRLCSPSTDEINRLGRLDRNVGELFALAVNNLLTKCAIAKEEVIAIGSHGQTVRHMPNLEVGFTLQIGDPNTIATETGIDVIADFRRKDIALGGQGAPLVPAFHQQTFAEVGKKRIILNIGGIANITYLPGNSDQVLGFDTGPGNTLVDAWIQQVKSEPFDRDGAWAASGKTDQDLLTQLLSHPYFSLAYPKSTGRELFNQAWLEQQLSPFNHLDEEDIQSTLLDLTCHSIARDMIKLSNEGELYVCGGGAFNGQLMQRLAALLPGYTLNTTSALGVDPKWAEGIAFAWLAMRNHLGLPANLPAVTGASREAVLGGRFSAK.

ATP is bound at residue 12 to 19; the sequence is GTSMDGVD.

The protein belongs to the anhydro-N-acetylmuramic acid kinase family.

The enzyme catalyses 1,6-anhydro-N-acetyl-beta-muramate + ATP + H2O = N-acetyl-D-muramate 6-phosphate + ADP + H(+). It participates in amino-sugar metabolism; 1,6-anhydro-N-acetylmuramate degradation. It functions in the pathway cell wall biogenesis; peptidoglycan recycling. Functionally, catalyzes the specific phosphorylation of 1,6-anhydro-N-acetylmuramic acid (anhMurNAc) with the simultaneous cleavage of the 1,6-anhydro ring, generating MurNAc-6-P. Is required for the utilization of anhMurNAc either imported from the medium or derived from its own cell wall murein, and thus plays a role in cell wall recycling. The sequence is that of Anhydro-N-acetylmuramic acid kinase from Shewanella baltica (strain OS223).